The chain runs to 125 residues: Protein ApaG (125 aa).

Positions 1 to 125 (MIDSPRVCVQ…FRLAVPTFIH (125 aa)) constitute an ApaG domain.

The chain is Protein ApaG from Enterobacter sp. (strain 638).